The chain runs to 223 residues: TMF-regulated nuclear protein 1 (223 aa).

2 disordered regions span residues 1-84 (MPGC…GPAG) and 196-223 (GRLR…SPQR). Residues 21–54 (GSPPPPPREPLPSLQPPSPSPTSTPTPTKSPPLP) show a composition bias toward pro residues. Gly residues predominate over residues 73–84 (ASGGSGGAGPAG).

Interacts with TMF1; may regulate TRNP1 proteasomal degradation. Post-translationally, ubiquitinated, leading to its degradation by the proteasome. Expressed in brain and kidney (at protein level). Also detected in spleen and intestine.

It localises to the nucleus. In terms of biological role, DNA-binding factor that regulates the expression of a subset of genes and plays a key role in tangential, radial, and lateral expansion of the brain neocortex. Regulates neural stem cells proliferation and the production of intermediate neural progenitors and basal radial glial cells affecting the process of cerebral cortex gyrification. May control the proliferation rate of cells by regulating their progression through key cell-cycle transition points. This Mus musculus (Mouse) protein is TMF-regulated nuclear protein 1 (Trnp1).